The sequence spans 177 residues: MACCQTSFCGFPSCSTSGTCGSSCCQPSCCETSSCQPRCCETSCCQPSCCQTSFCGFPSFSTGGTCDSSCCQPSCCETSCCQPSCYQTSSCGTGCGIGGGIGYGQEGSSGAVSTRIRWCRPDCRVEGTCLPPCCVVSCTPPSCCQLHHAEASCCRPSYCGQSCCRPVCCCYCSEPTC.

Belongs to the KRTAP type 1 family. As to quaternary structure, interacts with hair keratins. In terms of tissue distribution, expressed in the middle/upper portions of the hair cortex, in the region termed the keratogenous zone.

Functionally, in the hair cortex, hair keratin intermediate filaments are embedded in an interfilamentous matrix, consisting of hair keratin-associated proteins (KRTAP), which are essential for the formation of a rigid and resistant hair shaft through their extensive disulfide bond cross-linking with abundant cysteine residues of hair keratins. The matrix proteins include the high-sulfur and high-glycine-tyrosine keratins. The sequence is that of Keratin-associated protein 1-1 (KRTAP1-1) from Homo sapiens (Human).